The primary structure comprises 298 residues: Aspartate carbamoyltransferase catalytic subunit (298 aa).

Positions 50 and 51 each coordinate carbamoyl phosphate. Lys79 is an L-aspartate binding site. Arg100, His128, and Gln131 together coordinate carbamoyl phosphate. The L-aspartate site is built by Arg160 and Arg221. Residues Leu260 and Pro261 each contribute to the carbamoyl phosphate site.

This sequence belongs to the aspartate/ornithine carbamoyltransferase superfamily. ATCase family. In terms of assembly, heterooligomer of catalytic and regulatory chains.

The catalysed reaction is carbamoyl phosphate + L-aspartate = N-carbamoyl-L-aspartate + phosphate + H(+). Its pathway is pyrimidine metabolism; UMP biosynthesis via de novo pathway; (S)-dihydroorotate from bicarbonate: step 2/3. In terms of biological role, catalyzes the condensation of carbamoyl phosphate and aspartate to form carbamoyl aspartate and inorganic phosphate, the committed step in the de novo pyrimidine nucleotide biosynthesis pathway. The sequence is that of Aspartate carbamoyltransferase catalytic subunit from Methanospirillum hungatei JF-1 (strain ATCC 27890 / DSM 864 / NBRC 100397 / JF-1).